Here is a 309-residue protein sequence, read N- to C-terminus: Tagatose-6-phosphate kinase (309 aa).

It belongs to the carbohydrate kinase PfkB family. LacC subfamily.

The catalysed reaction is D-tagatofuranose 6-phosphate + ATP = D-tagatofuranose 1,6-bisphosphate + ADP + H(+). The protein operates within carbohydrate metabolism; D-tagatose 6-phosphate degradation; D-glyceraldehyde 3-phosphate and glycerone phosphate from D-tagatose 6-phosphate: step 1/2. This Streptococcus pneumoniae (strain ATCC 700669 / Spain 23F-1) protein is Tagatose-6-phosphate kinase.